The following is a 516-amino-acid chain: Cytochrome P450 monooxygenase dtxS2 (516 aa).

Residues 23 to 43 form a helical membrane-spanning segment; that stretch reads ILASVIVLLGLKVATILYTAF. N187 carries N-linked (GlcNAc...) asparagine glycosylation. A helical membrane pass occupies residues 229–249; sequence VLVPLLVFPYISWLLVWWLLS. C458 serves as a coordination point for heme.

This sequence belongs to the cytochrome P450 family. The cofactor is heme.

It is found in the membrane. It participates in secondary metabolite biosynthesis. Functionally, cytochrome P450 monooxygenase; part of the gene cluster that mediates the biosynthesis of destruxins, insecticidal cyclic hexadepsipeptides which induce flaccid paralysis and visceral muscle contraction in insects through targeting the calcium channels and vacuolar-type ATPases. The aldo-keto reductase dtxS3 converts alpha-ketoisocaproic acid from deaminated leucine into alpha-hydroxyisocaproic acid (HIC), which is the first substrate for destruxin assembly by dtxS1. L-aspartate decarboxylase dtxS4 converts aspartic acid into beta-alanine, the last substrate for the destruxin assembly line performed by dtxS1. The nonribosomal peptide synthetase dtxS1 synthesizes destruxins B and B2, whereas the cytochrome P450 monooxygenase dtxS2 is required to convert destruxin B into other destruxin derivatives, including destructins C, D, A and E. Destruxin E-diol (ED) is further produced in a non-enzymatic manner from destruxin E. Destruxins play an important role in virulence and escape from insect host immune defenses. In Metarhizium robertsii (strain ARSEF 23 / ATCC MYA-3075) (Metarhizium anisopliae (strain ARSEF 23)), this protein is Cytochrome P450 monooxygenase dtxS2.